A 557-amino-acid polypeptide reads, in one-letter code: Putative inactive polypeptide N-acetylgalactosaminyltransferase 11 (557 aa).

The Cytoplasmic segment spans residues 1-4; it reads MKSL. A helical; Signal-anchor for type II membrane protein transmembrane segment spans residues 5–27; sequence LFGTPCSCAIFILVYCIITLFIW. Residues 28 to 557 are Lumenal-facing; sequence FLYTDNLSNA…MRDICLSVNH (530 aa). Asparagine 33 and asparagine 103 each carry an N-linked (GlcNAc...) asparagine glycan. Disulfide bonds link cysteine 99-cysteine 325, cysteine 316-cysteine 397, cysteine 437-cysteine 450, cysteine 472-cysteine 486, and cysteine 511-cysteine 526. The tract at residues 109–215 is catalytic subdomain A; it reads TVTVSIVIAI…RGWLPPLLEP (107 aa). Asparagine 220 carries N-linked (GlcNAc...) asparagine glycosylation. The interval 271–333 is catalytic subdomain B; it reads PYPSSQLEGR…PCSRVGIIYK (63 aa). Asparagine 379 carries N-linked (GlcNAc...) asparagine glycosylation. Residues 456–557 form the Ricin B-type lectin domain; the sequence is EDWTLTSRCQ…MRDICLSVNH (102 aa).

It belongs to the glycosyltransferase 2 family. GalNAc-T subfamily.

It is found in the golgi apparatus membrane. In terms of biological role, probable inactive glycosyltransferase. The protein is Putative inactive polypeptide N-acetylgalactosaminyltransferase 11 of Drosophila melanogaster (Fruit fly).